Reading from the N-terminus, the 242-residue chain is Proteasome subunit alpha (242 aa).

This sequence belongs to the peptidase T1A family. The 20S proteasome core is composed of 14 alpha and 14 beta subunits that assemble into four stacked heptameric rings, resulting in a barrel-shaped structure. The two inner rings, each composed of seven catalytic beta subunits, are sandwiched by two outer rings, each composed of seven alpha subunits. The catalytic chamber with the active sites is on the inside of the barrel. Has a gated structure, the ends of the cylinder being occluded by the N-termini of the alpha-subunits. Is capped at one or both ends by the proteasome regulatory ATPase, PAN.

It localises to the cytoplasm. The formation of the proteasomal ATPase PAN-20S proteasome complex, via the docking of the C-termini of PAN into the intersubunit pockets in the alpha-rings, triggers opening of the gate for substrate entry. Interconversion between the open-gate and close-gate conformations leads to a dynamic regulation of the 20S proteasome proteolysis activity. Component of the proteasome core, a large protease complex with broad specificity involved in protein degradation. This chain is Proteasome subunit alpha, found in Sulfurisphaera tokodaii (strain DSM 16993 / JCM 10545 / NBRC 100140 / 7) (Sulfolobus tokodaii).